The chain runs to 192 residues: Intraflagellar transport protein 22 (192 aa).

GTP contacts are provided by residues 12–19 and 62–69; these read GPQRTGKT and WDVSGSVQ.

It belongs to the small GTPase superfamily. Rab family. Component of the IFT complex B, composed of IFT88, IFT70, IFT52, IFT46, IFT27, IFT25 and IFT22.

The protein resides in the cell projection. The protein localises to the cilium. Its subcellular location is the flagellum. Component of the intraflagellar transport (IFT) complex B. Functions in regulating the cellular pool size of both complex A and complex B and thus plays a critical role in determining the cellular availability of IFT particles. In Chlamydomonas reinhardtii (Chlamydomonas smithii), this protein is Intraflagellar transport protein 22 (FAP9).